The sequence spans 125 residues: Large ribosomal subunit protein bL12 (125 aa).

The protein belongs to the bacterial ribosomal protein bL12 family. Homodimer. Part of the ribosomal stalk of the 50S ribosomal subunit. Forms a multimeric L10(L12)X complex, where L10 forms an elongated spine to which 2 to 4 L12 dimers bind in a sequential fashion. Binds GTP-bound translation factors.

Functionally, forms part of the ribosomal stalk which helps the ribosome interact with GTP-bound translation factors. Is thus essential for accurate translation. The protein is Large ribosomal subunit protein bL12 of Campylobacter jejuni (strain RM1221).